The primary structure comprises 66 residues: Brevinin-1DYb (66 aa).

Residues 1 to 22 (MFTLKKSLLLLFFLGTISLSLC) form the signal peptide. A propeptide spanning residues 23 to 44 (EEERNAEEERRDYPEERDVEVE) is cleaved from the precursor. A disulfide bond links Cys60 and Cys66.

In terms of tissue distribution, expressed by the skin glands.

The protein resides in the secreted. Its function is as follows. Antimicrobial peptide. Has low activity against the Gram-positive bacterium S.aureus and the Gram-negative bacterium E.coli (MIC&lt;15 uM). Has a strong hemolytic activity. The sequence is that of Brevinin-1DYb from Rana dybowskii (Dybovsky's frog).